Reading from the N-terminus, the 645-residue chain is Acetyl-coenzyme A synthetase (645 aa).

CoA is bound by residues 190 to 193 (RGGR), Thr309, and Asn333. ATP is bound by residues 385–387 (GEP), 409–414 (DTWWQT), Asp498, and Arg513. Ser521 contacts CoA. Arg524 is an ATP binding site. Residues Val535, His537, and Val540 each coordinate Mg(2+). CoA is bound at residue Arg582. Lys607 bears the N6-acetyllysine mark.

The protein belongs to the ATP-dependent AMP-binding enzyme family. Requires Mg(2+) as cofactor. Post-translationally, acetylated. Deacetylation by the SIR2-homolog deacetylase activates the enzyme.

It carries out the reaction acetate + ATP + CoA = acetyl-CoA + AMP + diphosphate. Catalyzes the conversion of acetate into acetyl-CoA (AcCoA), an essential intermediate at the junction of anabolic and catabolic pathways. AcsA undergoes a two-step reaction. In the first half reaction, AcsA combines acetate with ATP to form acetyl-adenylate (AcAMP) intermediate. In the second half reaction, it can then transfer the acetyl group from AcAMP to the sulfhydryl group of CoA, forming the product AcCoA. The protein is Acetyl-coenzyme A synthetase of Beijerinckia indica subsp. indica (strain ATCC 9039 / DSM 1715 / NCIMB 8712).